A 145-amino-acid chain; its full sequence is Small t antigen (145 aa).

One can recognise a J domain in the interval 6-82; that stretch reads RLTELLCLPV…PEESGYATFE (77 aa). The disordered stretch occupies residues 58–80; it reads EGLRADETLEDSDPEPEESGYAT. Acidic residues predominate over residues 65–75; the sequence is TLEDSDPEPEE.

Interacts with host PPP2R1A; the interaction inhibits PP2A activity.

It is found in the host cytoplasm. The protein resides in the host nucleus. Its function is as follows. Promotes efficient viral genome replication by accelerating both G1 and S phase progression of the cell cycle. The chain is Small t antigen from Budgerigar fledgling disease virus (BFPyV).